We begin with the raw amino-acid sequence, 278 residues long: Small ribosomal subunit biogenesis GTPase RsgA (278 aa).

Positions 62–218 (KNELTRPRVA…ICDTPGFNVI (157 aa)) constitute a CP-type G domain. Residues 112–115 (TKTD) and 162–170 (GQSGVGKSS) each bind GTP. Residues Cys241, Cys246, His248, and Cys254 each coordinate Zn(2+).

It belongs to the TRAFAC class YlqF/YawG GTPase family. RsgA subfamily. As to quaternary structure, monomer. Associates with 30S ribosomal subunit, binds 16S rRNA. Requires Zn(2+) as cofactor.

It localises to the cytoplasm. In terms of biological role, one of several proteins that assist in the late maturation steps of the functional core of the 30S ribosomal subunit. Helps release RbfA from mature subunits. May play a role in the assembly of ribosomal proteins into the subunit. Circularly permuted GTPase that catalyzes slow GTP hydrolysis, GTPase activity is stimulated by the 30S ribosomal subunit. The protein is Small ribosomal subunit biogenesis GTPase RsgA of Mycoplasma genitalium (strain ATCC 33530 / DSM 19775 / NCTC 10195 / G37) (Mycoplasmoides genitalium).